The primary structure comprises 157 residues: Crossover junction endodeoxyribonuclease RuvC (157 aa).

Catalysis depends on residues aspartate 7, glutamate 67, and aspartate 140. Mg(2+) contacts are provided by aspartate 7, glutamate 67, and aspartate 140.

It belongs to the RuvC family. Homodimer which binds Holliday junction (HJ) DNA. The HJ becomes 2-fold symmetrical on binding to RuvC with unstacked arms; it has a different conformation from HJ DNA in complex with RuvA. In the full resolvosome a probable DNA-RuvA(4)-RuvB(12)-RuvC(2) complex forms which resolves the HJ. Mg(2+) is required as a cofactor.

Its subcellular location is the cytoplasm. The catalysed reaction is Endonucleolytic cleavage at a junction such as a reciprocal single-stranded crossover between two homologous DNA duplexes (Holliday junction).. The RuvA-RuvB-RuvC complex processes Holliday junction (HJ) DNA during genetic recombination and DNA repair. Endonuclease that resolves HJ intermediates. Cleaves cruciform DNA by making single-stranded nicks across the HJ at symmetrical positions within the homologous arms, yielding a 5'-phosphate and a 3'-hydroxyl group; requires a central core of homology in the junction. The consensus cleavage sequence is 5'-(A/T)TT(C/G)-3'. Cleavage occurs on the 3'-side of the TT dinucleotide at the point of strand exchange. HJ branch migration catalyzed by RuvA-RuvB allows RuvC to scan DNA until it finds its consensus sequence, where it cleaves and resolves the cruciform DNA. The protein is Crossover junction endodeoxyribonuclease RuvC of Rickettsia conorii (strain ATCC VR-613 / Malish 7).